Reading from the N-terminus, the 429-residue chain is Serine--tRNA ligase (429 aa).

Residue 229 to 231 (TAE) participates in L-serine binding. Position 260–262 (260–262 (RSE)) interacts with ATP. Glu283 contributes to the L-serine binding site. 347–350 (EISS) contributes to the ATP binding site. Residue Ser383 participates in L-serine binding.

This sequence belongs to the class-II aminoacyl-tRNA synthetase family. Type-1 seryl-tRNA synthetase subfamily. In terms of assembly, homodimer. The tRNA molecule binds across the dimer.

It localises to the cytoplasm. It carries out the reaction tRNA(Ser) + L-serine + ATP = L-seryl-tRNA(Ser) + AMP + diphosphate + H(+). It catalyses the reaction tRNA(Sec) + L-serine + ATP = L-seryl-tRNA(Sec) + AMP + diphosphate + H(+). The protein operates within aminoacyl-tRNA biosynthesis; selenocysteinyl-tRNA(Sec) biosynthesis; L-seryl-tRNA(Sec) from L-serine and tRNA(Sec): step 1/1. Its function is as follows. Catalyzes the attachment of serine to tRNA(Ser). Is also able to aminoacylate tRNA(Sec) with serine, to form the misacylated tRNA L-seryl-tRNA(Sec), which will be further converted into selenocysteinyl-tRNA(Sec). The sequence is that of Serine--tRNA ligase from Orientia tsutsugamushi (strain Ikeda) (Rickettsia tsutsugamushi).